A 434-amino-acid polypeptide reads, in one-letter code: D-amino acid dehydrogenase (434 aa).

FAD is bound at residue 3–17 (VLVLGSGVIGTASAY).

The protein belongs to the DadA oxidoreductase family. FAD is required as a cofactor.

It catalyses the reaction a D-alpha-amino acid + A + H2O = a 2-oxocarboxylate + AH2 + NH4(+). The protein operates within amino-acid degradation; D-alanine degradation; NH(3) and pyruvate from D-alanine: step 1/1. In terms of biological role, oxidative deamination of D-amino acids. This chain is D-amino acid dehydrogenase, found in Pseudomonas putida (strain GB-1).